Consider the following 189-residue polypeptide: UPF0312 protein VC0395_0473/VC395_A0785 (189 aa).

Positions 1 to 22 (MKKTLMAVGLAAVISIPFAANA) are cleaved as a signal peptide.

The protein belongs to the UPF0312 family. Type 1 subfamily.

The protein localises to the periplasm. The sequence is that of UPF0312 protein VC0395_0473/VC395_A0785 from Vibrio cholerae serotype O1 (strain ATCC 39541 / Classical Ogawa 395 / O395).